A 632-amino-acid chain; its full sequence is 1-deoxy-D-xylulose-5-phosphate synthase (632 aa).

Residues H87 and 128–130 contribute to the thiamine diphosphate site; that span reads GHS. D159 is a Mg(2+) binding site. Residues 160–161, N188, F295, and E377 contribute to the thiamine diphosphate site; that span reads GA. N188 is a Mg(2+) binding site.

This sequence belongs to the transketolase family. DXPS subfamily. Homodimer. Requires Mg(2+) as cofactor. It depends on thiamine diphosphate as a cofactor.

It catalyses the reaction D-glyceraldehyde 3-phosphate + pyruvate + H(+) = 1-deoxy-D-xylulose 5-phosphate + CO2. It participates in metabolic intermediate biosynthesis; 1-deoxy-D-xylulose 5-phosphate biosynthesis; 1-deoxy-D-xylulose 5-phosphate from D-glyceraldehyde 3-phosphate and pyruvate: step 1/1. Functionally, catalyzes the acyloin condensation reaction between C atoms 2 and 3 of pyruvate and glyceraldehyde 3-phosphate to yield 1-deoxy-D-xylulose-5-phosphate (DXP). In Stutzerimonas stutzeri (strain A1501) (Pseudomonas stutzeri), this protein is 1-deoxy-D-xylulose-5-phosphate synthase.